We begin with the raw amino-acid sequence, 443 residues long: Xaa-Pro dipeptidase (443 aa).

Residues D246, D257, H339, E384, and E423 each contribute to the Mn(2+) site.

This sequence belongs to the peptidase M24B family. Bacterial-type prolidase subfamily. It depends on Mn(2+) as a cofactor.

The catalysed reaction is Xaa-L-Pro dipeptide + H2O = an L-alpha-amino acid + L-proline. In terms of biological role, splits dipeptides with a prolyl residue in the C-terminal position. This Salmonella choleraesuis (strain SC-B67) protein is Xaa-Pro dipeptidase.